The primary structure comprises 93 residues: NAD(P)H-quinone oxidoreductase subunit 4L, chloroplastic (93 aa).

Helical transmembrane passes span 1–21 and 60–80; these read MLEH…SGLI and IFAI…LSIA.

The protein belongs to the complex I subunit 4L family. As to quaternary structure, NDH is composed of at least 16 different subunits, 5 of which are encoded in the nucleus.

The protein resides in the plastid. Its subcellular location is the chloroplast thylakoid membrane. It carries out the reaction a plastoquinone + NADH + (n+1) H(+)(in) = a plastoquinol + NAD(+) + n H(+)(out). It catalyses the reaction a plastoquinone + NADPH + (n+1) H(+)(in) = a plastoquinol + NADP(+) + n H(+)(out). In terms of biological role, NDH shuttles electrons from NAD(P)H:plastoquinone, via FMN and iron-sulfur (Fe-S) centers, to quinones in the photosynthetic chain and possibly in a chloroplast respiratory chain. The immediate electron acceptor for the enzyme in this species is believed to be plastoquinone. Couples the redox reaction to proton translocation, and thus conserves the redox energy in a proton gradient. The chain is NAD(P)H-quinone oxidoreductase subunit 4L, chloroplastic from Anthoceros angustus (Hornwort).